We begin with the raw amino-acid sequence, 474 residues long: Transcription factor SOX-4 (474 aa).

Over residues 1–10 the composition is skewed to polar residues; it reads MVQQTNNAEN. The interval 1–58 is disordered; sequence MVQQTNNAENTEALLAGESSDSGAGLELGIASSPTPGSTASTGGKADDPSWCKTPSGH. Low complexity predominate over residues 31-44; the sequence is ASSPTPGSTASTGG. A DNA-binding region (HMG box) is located at residues 59–127; sequence IKRPMNAFMV…KHMADYPDYK (69 aa). Lys95 carries the N6-acetyllysine modification. Disordered stretches follow at residues 128-228, 262-286, and 302-416; these read YRPR…GGGK, ARTP…APGK, and LGTS…NFES. Positions 138–149 are enriched in low complexity; it reads NANSSSSAAASS. Gly residues predominate over residues 158–189; sequence VGGSGGGGHGGGGGGGSSNAGGGGGGASGGGA. 4 stretches are compositionally biased toward low complexity: residues 266–283, 304–320, 336–354, and 366–396; these read SASA…ALAA, TSSS…DPSD, APSL…AGRS, and AASP…GSSS. Residues 397-406 are compositionally biased toward acidic residues; sequence SDDEFEDDLL. Over residues 407 to 416 the composition is skewed to low complexity; that stretch reads DLNPSSNFES. A 9aaTAD motif is present at residues 426–434; that stretch reads SALDRDLDF.

In terms of assembly, interacts with UBE2I. Interacts with HDAC1; interaction inhibits the transcriptional activator activity. Acetylation at Lys-95 by KAT5 promotes the transcription activator activity and is required during myoblast differentiation. Acetylation by KAT5 abolishes the interaction between SOX4 and HDAC1 and switches SOX4 into a transcriptional activator. Testis, brain, and heart.

It is found in the nucleus. Functionally, transcriptional activator that binds with high affinity to the T-cell enhancer motif 5'-AACAAAG-3' motif. Required for IL17A-producing Vgamma2-positive gamma-delta T-cell maturation and development, via binding to regulator loci of RORC to modulate expression. Involved in skeletal myoblast differentiation by promoting gene expression of CALD1. The polypeptide is Transcription factor SOX-4 (Homo sapiens (Human)).